The sequence spans 121 residues: Small ribosomal subunit protein uS13 (121 aa).

The segment at 91–121 (HRRGLPVRGQKTKNNARTRKGPVKTVANKKK) is disordered.

Belongs to the universal ribosomal protein uS13 family. As to quaternary structure, part of the 30S ribosomal subunit. Forms a loose heterodimer with protein S19. Forms two bridges to the 50S subunit in the 70S ribosome.

Functionally, located at the top of the head of the 30S subunit, it contacts several helices of the 16S rRNA. In the 70S ribosome it contacts the 23S rRNA (bridge B1a) and protein L5 of the 50S subunit (bridge B1b), connecting the 2 subunits; these bridges are implicated in subunit movement. Contacts the tRNAs in the A and P-sites. This is Small ribosomal subunit protein uS13 from Staphylococcus aureus (strain Mu3 / ATCC 700698).